The primary structure comprises 95 residues: Acylphosphatase (95 aa).

In terms of domain architecture, Acylphosphatase-like spans 5-93 (RAHVFIRGKV…GEFKDFKILP (89 aa)). Active-site residues include Arg20 and Asn38.

This sequence belongs to the acylphosphatase family.

It carries out the reaction an acyl phosphate + H2O = a carboxylate + phosphate + H(+). In Pyrobaculum aerophilum (strain ATCC 51768 / DSM 7523 / JCM 9630 / CIP 104966 / NBRC 100827 / IM2), this protein is Acylphosphatase (acyP).